The following is a 225-amino-acid chain: Alpha-tubulin N-acetyltransferase 1 (225 aa).

Residues 1-190 (MEFPFDVDAL…NNFVIFEGFF (190 aa)) enclose the N-acetyltransferase domain. K56 carries the N6-acetyllysine; by autocatalysis modification. 124–137 (FYIHESLQRHGHGR) is a binding site for acetyl-CoA. At K146 the chain carries N6-acetyllysine; by autocatalysis. Position 160 to 169 (160 to 169 (SQKLLKFLNK)) interacts with acetyl-CoA. The disordered stretch occupies residues 195–225 (PPARKLPPKRAEGDIKPYSSSDRESGLPQGW). Over residues 203-219 (KRAEGDIKPYSSSDRES) the composition is skewed to basic and acidic residues. Position 210 is an N6-acetyllysine; by autocatalysis (K210).

It belongs to the acetyltransferase ATAT1 family. As to quaternary structure, component of the BBSome complex. Interacts with AP2 alpha-adaptins, including AP2A2, but not with AP1 gamma-adaptin (AP1G1/AP1G2); this interaction is required for efficient alpha-tubulin acetylation, hence clathrin-coated pits are sites of microtubule acetylation. Autoacetylation strongly increases tubulin acetylation.

It is found in the cytoplasm. The protein resides in the membrane. Its subcellular location is the clathrin-coated pit. The protein localises to the cell junction. It localises to the focal adhesion. It is found in the cell projection. The protein resides in the axon. Its subcellular location is the cytoskeleton. The protein localises to the spindle. It carries out the reaction L-lysyl-[alpha-tubulin] + acetyl-CoA = N(6)-acetyl-L-lysyl-[alpha-tubulin] + CoA + H(+). Functionally, specifically acetylates 'Lys-40' in alpha-tubulin on the lumenal side of microtubules. Promotes microtubule destabilization and accelerates microtubule dynamics; this activity may be independent of acetylation activity. Acetylates alpha-tubulin with a slow enzymatic rate, due to a catalytic site that is not optimized for acetyl transfer. Enters the microtubule through each end and diffuses quickly throughout the lumen of microtubules. Acetylates only long/old microtubules because of its slow acetylation rate since it does not have time to act on dynamically unstable microtubules before the enzyme is released. Required for normal sperm flagellar function. Promotes directional cell locomotion and chemotaxis, through AP2A2-dependent acetylation of alpha-tubulin at clathrin-coated pits that are concentrated at the leading edge of migrating cells. May facilitate primary cilium assembly. In Bos taurus (Bovine), this protein is Alpha-tubulin N-acetyltransferase 1.